Consider the following 262-residue polypeptide: uncharacterized protein (262 aa).

The protein belongs to the glycosyltransferase 2 family.

This is an uncharacterized protein from Mycobacterium tuberculosis (strain CDC 1551 / Oshkosh).